Here is a 140-residue protein sequence, read N- to C-terminus: ATP synthase epsilon chain (140 aa).

It belongs to the ATPase epsilon chain family. As to quaternary structure, F-type ATPases have 2 components, CF(1) - the catalytic core - and CF(0) - the membrane proton channel. CF(1) has five subunits: alpha(3), beta(3), gamma(1), delta(1), epsilon(1). CF(0) has three main subunits: a, b and c.

The protein localises to the cell inner membrane. Produces ATP from ADP in the presence of a proton gradient across the membrane. This Saccharophagus degradans (strain 2-40 / ATCC 43961 / DSM 17024) protein is ATP synthase epsilon chain.